The sequence spans 899 residues: Tubulin glycylase 3F (899 aa).

Positions 471–835 (FKDVIQIIKN…TEYYQIQNWK (365 aa)) constitute a TTL domain. Residues 642–645 (QKYI), Lys663, and Asp665 contribute to the ATP site.

It is found in the cytoplasm. The protein resides in the cytoskeleton. It localises to the cilium basal body. Functionally, probable glycylase which modifies tubulin, generating side chains of glycine on the gamma-carboxyl groups of specific glutamate residues within the C-terminal tail of tubulin. This Tetrahymena thermophila (strain SB210) protein is Tubulin glycylase 3F (TTLL3F).